Consider the following 364-residue polypeptide: Ferrochelatase (364 aa).

Residues histidine 210 and glutamate 291 each coordinate Fe cation.

Belongs to the ferrochelatase family.

It is found in the cytoplasm. It catalyses the reaction heme b + 2 H(+) = protoporphyrin IX + Fe(2+). The protein operates within porphyrin-containing compound metabolism; protoheme biosynthesis; protoheme from protoporphyrin-IX: step 1/1. Catalyzes the ferrous insertion into protoporphyrin IX. In Idiomarina loihiensis (strain ATCC BAA-735 / DSM 15497 / L2-TR), this protein is Ferrochelatase.